We begin with the raw amino-acid sequence, 260 residues long: Cytosolic Fe-S cluster assembly factor Nubp2 homolog (260 aa).

14-21 (GKGGVGKS) contributes to the ATP binding site. The [4Fe-4S] cluster site is built by cysteine 188 and cysteine 191.

The protein belongs to the Mrp/NBP35 ATP-binding proteins family. NUBP2/CFD1 subfamily. Heterotetramer of 2 Nubp1 and 2 Nubp2 chains. [4Fe-4S] cluster is required as a cofactor.

The protein localises to the cytoplasm. Component of the cytosolic iron-sulfur (Fe/S) protein assembly (CIA) machinery. Required for maturation of extramitochondrial Fe-S proteins. The Nubp1-Nubp2 heterotetramer forms a Fe-S scaffold complex, mediating the de novo assembly of an Fe-S cluster and its transfer to target apoproteins. This chain is Cytosolic Fe-S cluster assembly factor Nubp2 homolog, found in Drosophila simulans (Fruit fly).